The primary structure comprises 314 residues: MIEIEKPKIETVEISDDAKYGKFVVEPLERGYGTTLGNSLRRILLSSLPGAAVTSIQIDGVLHEFSTIEGVVEDVTTIILNIKKLALKIYSEEEKTLEIDVQDEGTVTAADITHDSDIEILNPDLHIATLGKNASFRVRLTAQRGRGYNPADANKRDDQPIGVIPIDSIYTPVSRVTYQVENTRVGQITNYDKLTLDVWTDGSTGPKEAIALGSKILTEHLNIFVGLTDEAQHAEIMVEKEEDQKEKVLEMTIEELDLSVRSYNCLKRAGINTVQELANKTEEDMMKVRNLGRKSLEEVKAKLEELGLGLRKDD.

An alpha N-terminal domain (alpha-NTD) region spans residues 1 to 228 (MIEIEKPKIE…EHLNIFVGLT (228 aa)). The alpha C-terminal domain (alpha-CTD) stretch occupies residues 246–314 (EKVLEMTIEE…ELGLGLRKDD (69 aa)).

Belongs to the RNA polymerase alpha chain family. As to quaternary structure, homodimer. The RNAP catalytic core consists of 2 alpha, 1 beta, 1 beta' and 1 omega subunit. When a sigma factor is associated with the core the holoenzyme is formed, which can initiate transcription.

The enzyme catalyses RNA(n) + a ribonucleoside 5'-triphosphate = RNA(n+1) + diphosphate. Its function is as follows. DNA-dependent RNA polymerase catalyzes the transcription of DNA into RNA using the four ribonucleoside triphosphates as substrates. The protein is DNA-directed RNA polymerase subunit alpha of Bacillus pumilus (strain SAFR-032).